The sequence spans 219 residues: ATP-dependent Clp protease proteolytic subunit 3 (219 aa).

Catalysis depends on serine 112, which acts as the Nucleophile. Histidine 137 is an active-site residue.

Belongs to the peptidase S14 family. In terms of assembly, fourteen ClpP subunits assemble into 2 heptameric rings which stack back to back to give a disk-like structure with a central cavity, resembling the structure of eukaryotic proteasomes.

It is found in the cytoplasm. The enzyme catalyses Hydrolysis of proteins to small peptides in the presence of ATP and magnesium. alpha-casein is the usual test substrate. In the absence of ATP, only oligopeptides shorter than five residues are hydrolyzed (such as succinyl-Leu-Tyr-|-NHMec, and Leu-Tyr-Leu-|-Tyr-Trp, in which cleavage of the -Tyr-|-Leu- and -Tyr-|-Trp bonds also occurs).. Its function is as follows. Cleaves peptides in various proteins in a process that requires ATP hydrolysis. Has a chymotrypsin-like activity. Plays a major role in the degradation of misfolded proteins. The polypeptide is ATP-dependent Clp protease proteolytic subunit 3 (Streptomyces avermitilis (strain ATCC 31267 / DSM 46492 / JCM 5070 / NBRC 14893 / NCIMB 12804 / NRRL 8165 / MA-4680)).